Consider the following 129-residue polypeptide: Protein Turandot B1 (129 aa).

The N-terminal stretch at 1–21 (MNSATSLMCFALLLISPLCMG) is a signal peptide.

The protein belongs to the Turandot family.

The protein resides in the secreted. In terms of biological role, a humoral factor that may play a role in stress tolerance. This Drosophila erecta (Fruit fly) protein is Protein Turandot B1 (TotB1).